Consider the following 196-residue polypeptide: Oplophorus-luciferin 2-monooxygenase catalytic subunit (196 aa).

Residues 1–27 (MAYSTLFIIALTAVVTQASSTQKSNLT) form the signal peptide.

Heterotetramer of a catalytic 19 kDa and a non-catalytic 35 kDa subunit.

The protein resides in the secreted. It carries out the reaction coelenterazine + O2 = coelenteramide + hnu + CO2. Its activity is regulated as follows. Inhibited by micromolar Cu(2+). In terms of biological role, catalytic subunit of oplophorus-luciferin 2-monooxygenase. Oxidoreductase that converts coelenterazine (the oplophorus luciferin) to coelenteramide under emission of blue light with a maximum at 454 nm. Is also active with bisdeoxycoelenterazine. The protein is Oplophorus-luciferin 2-monooxygenase catalytic subunit of Oplophorus gracilirostris (Luminous shrimp).